Consider the following 822-residue polypeptide: uncharacterized protein (822 aa).

The interval 1 to 230 (MARGKRSTQR…NAAPLNKTDA (230 aa)) is disordered. The residue at position 27 (S27) is a Phosphoserine. Over residues 34 to 44 (SKAKKNKKKLN) the composition is skewed to basic residues. S47, S51, and S55 each carry phosphoserine. Y57 carries the phosphotyrosine modification. Over residues 61 to 70 (PEDDEVDEEV) the composition is skewed to acidic residues. Positions 73–85 (VKKKPSKKSKKAK) are enriched in basic residues. Residues 92 to 106 (FADEQSVEEEEEEDS) show a composition bias toward acidic residues. S97 bears the Phosphoserine mark. Basic residues predominate over residues 111–121 (RKNKKSSKKAS). 2 stretches are compositionally biased toward acidic residues: residues 129-144 (LADDMDDLSLDEEESE) and 163-172 (SEALDDGDIE). Phosphoserine occurs at positions 137 and 163. 2 ABC transporter domains span residues 276 to 519 (LQVE…VQLA) and 594 to 809 (IKFQ…AKER). ATP is bound by residues 308-315 (APNGSGKS) and 627-634 (GPNGAGKT).

Belongs to the ABC transporter superfamily.

Its subcellular location is the cytoplasm. This is an uncharacterized protein from Schizosaccharomyces pombe (strain 972 / ATCC 24843) (Fission yeast).